Here is a 185-residue protein sequence, read N- to C-terminus: Transcriptional repressor NrdR (185 aa).

The disordered stretch occupies residues 1 to 24; that stretch reads MRCPFCGGPDTQVKDSRPSEDSSA. A zinc finger spans residues 3-34; that stretch reads CPFCGGPDTQVKDSRPSEDSSAIRRRRVCPDC. Basic and acidic residues predominate over residues 12 to 24; that stretch reads QVKDSRPSEDSSA. Residues 49–139 form the ATP-cone domain; the sequence is LVVLKRSGKR…VYKNFREAQD (91 aa). Positions 148-185 are disordered; that stretch reads GERLDGEGDLPEQGDAVPAPPDEAVAAPRRGRPARKRA. Residues 176-185 are compositionally biased toward basic residues; sequence RRGRPARKRA.

Belongs to the NrdR family. Zn(2+) is required as a cofactor.

In terms of biological role, negatively regulates transcription of bacterial ribonucleotide reductase nrd genes and operons by binding to NrdR-boxes. The sequence is that of Transcriptional repressor NrdR from Methylorubrum extorquens (strain CM4 / NCIMB 13688) (Methylobacterium extorquens).